A 940-amino-acid chain; its full sequence is Isoleucine--tRNA ligase (940 aa).

A 'HIGH' region motif is present at residues 59-69; sequence PYANGDIHIGH. Glutamate 563 lines the L-isoleucyl-5'-AMP pocket. Positions 604–608 match the 'KMSKS' region motif; sequence KMSKS. ATP is bound at residue lysine 607. Residues cysteine 903, cysteine 906, cysteine 923, and cysteine 926 each contribute to the Zn(2+) site.

It belongs to the class-I aminoacyl-tRNA synthetase family. IleS type 1 subfamily. Monomer. Zn(2+) is required as a cofactor.

Its subcellular location is the cytoplasm. The catalysed reaction is tRNA(Ile) + L-isoleucine + ATP = L-isoleucyl-tRNA(Ile) + AMP + diphosphate. Functionally, catalyzes the attachment of isoleucine to tRNA(Ile). As IleRS can inadvertently accommodate and process structurally similar amino acids such as valine, to avoid such errors it has two additional distinct tRNA(Ile)-dependent editing activities. One activity is designated as 'pretransfer' editing and involves the hydrolysis of activated Val-AMP. The other activity is designated 'posttransfer' editing and involves deacylation of mischarged Val-tRNA(Ile). In Wigglesworthia glossinidia brevipalpis, this protein is Isoleucine--tRNA ligase.